The primary structure comprises 173 residues: Cytochrome b6-f complex subunit 4, chloroplastic (173 aa).

The transit peptide at 1–14 directs the protein to the chloroplast; it reads ESALERRSSSVVMN. Helical transmembrane passes span 49–69, 108–128, and 144–164; these read LLYM…GLAV, LLGV…PFIE, and SVFL…TLPI.

This sequence belongs to the cytochrome b family. PetD subfamily. As to quaternary structure, the 4 large subunits of the cytochrome b6-f complex are cytochrome b6, subunit IV (17 kDa polypeptide, petD), cytochrome f and the Rieske protein, while the 4 small subunits are petG, petL, petM and petN. The complex functions as a dimer.

Its subcellular location is the plastid. It localises to the chloroplast thylakoid membrane. Component of the cytochrome b6-f complex, which mediates electron transfer between photosystem II (PSII) and photosystem I (PSI), cyclic electron flow around PSI, and state transitions. The chain is Cytochrome b6-f complex subunit 4, chloroplastic from Euglena gracilis.